We begin with the raw amino-acid sequence, 323 residues long: UDP-N-acetylenolpyruvoylglucosamine reductase (323 aa).

Residues 33–214 form the FAD-binding PCMH-type domain; it reads IGGPAEALFC…LSAVFTLTHG (182 aa). S243 (proton donor) is an active-site residue. E315 is an active-site residue.

The protein belongs to the MurB family. FAD is required as a cofactor.

The protein localises to the cytoplasm. It carries out the reaction UDP-N-acetyl-alpha-D-muramate + NADP(+) = UDP-N-acetyl-3-O-(1-carboxyvinyl)-alpha-D-glucosamine + NADPH + H(+). The protein operates within cell wall biogenesis; peptidoglycan biosynthesis. Cell wall formation. The polypeptide is UDP-N-acetylenolpyruvoylglucosamine reductase (Treponema denticola (strain ATCC 35405 / DSM 14222 / CIP 103919 / JCM 8153 / KCTC 15104)).